The following is a 434-amino-acid chain: Ribosomal protein uS12 methylthiotransferase RimO (434 aa).

The 119-residue stretch at 4–122 folds into the MTTase N-terminal domain; the sequence is NRVDVITLGC…LISHLGKSYY (119 aa). Cysteine 13, cysteine 51, cysteine 85, cysteine 146, cysteine 150, and cysteine 153 together coordinate [4Fe-4S] cluster. In terms of domain architecture, Radical SAM core spans 132–363; that stretch reads TTPRHYAYLK…MAVQERISAA (232 aa). Residues 366-434 enclose the TRAM domain; sequence EAKIGSRLRV…PFDLYARIVD (69 aa).

Belongs to the methylthiotransferase family. RimO subfamily. Requires [4Fe-4S] cluster as cofactor.

Its subcellular location is the cytoplasm. The enzyme catalyses L-aspartate(89)-[ribosomal protein uS12]-hydrogen + (sulfur carrier)-SH + AH2 + 2 S-adenosyl-L-methionine = 3-methylsulfanyl-L-aspartate(89)-[ribosomal protein uS12]-hydrogen + (sulfur carrier)-H + 5'-deoxyadenosine + L-methionine + A + S-adenosyl-L-homocysteine + 2 H(+). Functionally, catalyzes the methylthiolation of an aspartic acid residue of ribosomal protein uS12. This is Ribosomal protein uS12 methylthiotransferase RimO from Porphyromonas gingivalis (strain ATCC 33277 / DSM 20709 / CIP 103683 / JCM 12257 / NCTC 11834 / 2561).